The chain runs to 1487 residues: Protein cft1 (1487 aa).

Positions D486 to G504 are enriched in acidic residues. The interval D486–A513 is disordered.

Belongs to the CFT1 family.

It localises to the nucleus. RNA-binding component of the cleavage and polyadenylation factor (CPF) complex, which plays a key role in polyadenylation-dependent pre-mRNA 3'-end formation and cooperates with cleavage factors including the CFIA complex and hrp1/CFIB. Involved in poly(A) site recognition. May be involved in coupling transcription termination and mRNA 3'-end formation. The protein is Protein cft1 (paa-3) of Neurospora crassa (strain ATCC 24698 / 74-OR23-1A / CBS 708.71 / DSM 1257 / FGSC 987).